The sequence spans 197 residues: Adenylate kinase (197 aa).

ATP is bound at residue 16–21 (GAGKGT). Residues 36-65 (STGDILRDHVARGTELGQQVKPILDAGHLV) are NMP. Residues threonine 37, arginine 42, 63–65 (HLV), 90–93 (GFPR), and glutamine 97 each bind AMP. Residues 131 to 147 (ERGNQAQARGEAVRSDD) are LID. Arginine 132 provides a ligand contact to ATP. 2 residues coordinate AMP: arginine 144 and arginine 155. An ATP-binding site is contributed by glycine 183.

Belongs to the adenylate kinase family. Monomer.

It localises to the cytoplasm. The catalysed reaction is AMP + ATP = 2 ADP. The protein operates within purine metabolism; AMP biosynthesis via salvage pathway; AMP from ADP: step 1/1. Its function is as follows. Catalyzes the reversible transfer of the terminal phosphate group between ATP and AMP. Plays an important role in cellular energy homeostasis and in adenine nucleotide metabolism. This Deinococcus deserti (strain DSM 17065 / CIP 109153 / LMG 22923 / VCD115) protein is Adenylate kinase.